Here is a 345-residue protein sequence, read N- to C-terminus: Ferrochelatase (345 aa).

Residues histidine 215 and glutamate 296 each coordinate Fe cation.

Belongs to the ferrochelatase family.

It is found in the cytoplasm. The enzyme catalyses heme b + 2 H(+) = protoporphyrin IX + Fe(2+). It participates in porphyrin-containing compound metabolism; protoheme biosynthesis; protoheme from protoporphyrin-IX: step 1/1. In terms of biological role, catalyzes the ferrous insertion into protoporphyrin IX. The sequence is that of Ferrochelatase from Rhodopseudomonas palustris (strain HaA2).